Consider the following 681-residue polypeptide: Envelope glycoprotein (681 aa).

The signal sequence occupies residues 1-18 (MKTTCFLISLILIQGTKN). Residues 19 to 648 (LPILEIASNN…GLGGKWWTSD (630 aa)) are Extracellular-facing. 5 disulfide bridges follow: Cys-37–Cys-610, Cys-92–Cys-119, Cys-211–Cys-226, Cys-512–Cys-557, and Cys-602–Cys-609. The receptor-binding stretch occupies residues 38–188 (SGTLQKTEDV…FSRQGQGYRH (151 aa)). Residues Asn-94, Asn-171, Asn-190, Asn-202, Asn-207, Asn-219, Asn-223, and Asn-255 are each glycosylated (N-linked (GlcNAc...) asparagine; by host). The disordered stretch occupies residues 223–427 (NQTCAPSKIP…PPTPSSTAQH (205 aa)). 3 stretches are compositionally biased toward polar residues: residues 244–259 (LTSTPTDATKLNTTDP), 281–290 (TSDAVTKQGL), and 308–318 (GGNNTNHSQDA). A mucin-like region region spans residues 277–455 (EPHTTSDAVT…PFLDGLINAP (179 aa)). Asn-310, Asn-313, Asn-325, Asn-326, Asn-337, Asn-344, Asn-345, Asn-350, Asn-360, Asn-408, and Asn-487 each carry an N-linked (GlcNAc...) asparagine; by host glycan. The span at 337 to 347 (NTTTISTNNTS) shows a compositional bias: low complexity. Residues 348–414 (KHNFSTLSAP…TAPNTTNEHF (67 aa)) show a composition bias toward polar residues. The fusion peptide stretch occupies residues 529–549 (GLSWIPFFGPGIEGLYTAVLI). An N-linked (GlcNAc...) asparagine; by host glycan is attached at Asn-564. Asn-619 carries an N-linked (GlcNAc...) asparagine; by host glycan. The chain crosses the membrane as a helical span at residues 649–669 (WGVLTNLGILLLLSIAVLIAL). Over 670 to 681 (SCICRIFTKYIG) the chain is Cytoplasmic. S-palmitoyl cysteine; by host attachment occurs at residues Cys-671 and Cys-673.

Belongs to the filoviruses glycoprotein family. Homotrimer; each monomer consists of a GP1 and a GP2 subunit linked by disulfide bonds. The resulting peplomers (GP1,2) protrude from the virus surface as spikes. GP1,2 interacts with human CD209 and CLEC4M (collectively referred to as DC-SIGN(R)). Asialoglycoprotein receptor (ASGP-R) may be a liver-specific receptor for GP1,2. Members of the Tyro3 receptor tyrosine kinase family may be cell entry factors interacting with GP1,2. Post-translationally, N-glycosylated. In terms of processing, O-glycosylated in the mucin-like region. Specific enzymatic cleavages in vivo yield mature proteins. The precursor is processed into GP1 and GP2 by host cell furin in the trans Golgi, and maybe by other host proteases, to yield the mature GP1 and GP2 proteins. The cleavage site corresponds to the furin optimal cleavage sequence [KR]-X-[KR]-R. Post-translationally, GP1 is phosphorylated on serine residues between residues 260 and 273.

It is found in the virion membrane. The protein localises to the host cell membrane. GP1 is responsible for binding to the receptor(s) on target cells. Interacts with CD209/DC-SIGN and CLEC4M/DC-SIGNR which act as cofactors for virus entry into the host cell. Binding to CD209 and CLEC4M, which are respectively found on dendritic cells (DCs), and on endothelial cells of liver sinusoids and lymph node sinuses, facilitate infection of macrophages and endothelial cells. These interactions not only facilitate virus cell entry, but also allow capture of viral particles by DCs and subsequent transmission to susceptible cells without DCs infection (trans infection). In terms of biological role, GP2 acts as a class I viral fusion protein. Under the current model, the protein has at least 3 conformational states: pre-fusion native state, pre-hairpin intermediate state, and post-fusion hairpin state. During viral and target cell membrane fusion, the coiled coil regions (heptad repeats) assume a trimer-of-hairpins structure, positioning the fusion peptide in close proximity to the C-terminal region of the ectodomain. The formation of this structure appears to drive apposition and subsequent fusion of viral and target cell membranes. Responsible for penetration of the virus into the cell cytoplasm by mediating the fusion of the membrane of the endocytosed virus particle with the endosomal membrane. Low pH in endosomes induces an irreversible conformational change in GP2, releasing the fusion hydrophobic peptide. In Lake Victoria marburgvirus (strain Musoke-80) (MARV), this protein is Envelope glycoprotein (GP).